Here is a 214-residue protein sequence, read N- to C-terminus: Pyridoxine/pyridoxamine 5'-phosphate oxidase (214 aa).

Residues 8 to 11 (RTNY) and Lys-66 contribute to the substrate site. Residues 61–66 (RIVLIK), 76–77 (FT), Arg-82, Lys-83, and Gln-105 each bind FMN. Substrate is bound by residues Tyr-123, Arg-127, and Ser-131. FMN contacts are provided by residues 140-141 (QS) and Trp-184. 190–192 (RLH) contacts substrate. Arg-194 contributes to the FMN binding site.

Belongs to the pyridoxamine 5'-phosphate oxidase family. Homodimer. It depends on FMN as a cofactor.

The catalysed reaction is pyridoxamine 5'-phosphate + O2 + H2O = pyridoxal 5'-phosphate + H2O2 + NH4(+). The enzyme catalyses pyridoxine 5'-phosphate + O2 = pyridoxal 5'-phosphate + H2O2. Its pathway is cofactor metabolism; pyridoxal 5'-phosphate salvage; pyridoxal 5'-phosphate from pyridoxamine 5'-phosphate: step 1/1. It participates in cofactor metabolism; pyridoxal 5'-phosphate salvage; pyridoxal 5'-phosphate from pyridoxine 5'-phosphate: step 1/1. Functionally, catalyzes the oxidation of either pyridoxine 5'-phosphate (PNP) or pyridoxamine 5'-phosphate (PMP) into pyridoxal 5'-phosphate (PLP). In Burkholderia thailandensis (strain ATCC 700388 / DSM 13276 / CCUG 48851 / CIP 106301 / E264), this protein is Pyridoxine/pyridoxamine 5'-phosphate oxidase.